Consider the following 149-residue polypeptide: MADQLTEEQIAEFKEAFSLFDKDGDGTITTKELGTVMRSLGQNPTEAELQDMINEVDADGNGTIDFPEFLTMMARKMKETDSEEEIREAFRVFDKDGNGFISAAELRHVMTNLGEKLTDEEVDEMIREADIDGDGQVNYEEFVTMMTCK.

A2 carries the N-acetylalanine modification. 4 EF-hand domains span residues 8–43 (EQIAEFKEAFSLFDKDGDGTITTKELGTVMRSLGQN), 44–79 (PTEAELQDMINEVDADGNGTIDFPEFLTMMARKMKE), 81–116 (DSEEEIREAFRVFDKDGNGFISAAELRHVMTNLGEK), and 117–149 (LTDEEVDEMIREADIDGDGQVNYEEFVTMMTCK). The Ca(2+) site is built by D21, D23, D25, T27, E32, D57, D59, N61, T63, E68, D94, D96, N98, and E105. At K116 the chain carries N6,N6,N6-trimethyllysine. D130, D132, D134, Q136, and E141 together coordinate Ca(2+).

It belongs to the calmodulin family.

Its function is as follows. Calmodulin mediates the control of a large number of enzymes, ion channels and other proteins by Ca(2+). Among the enzymes to be stimulated by the calmodulin-Ca(2+) complex are a number of protein kinases and phosphatases. The protein is Calmodulin-B of Halocynthia roretzi (Sea squirt).